Reading from the N-terminus, the 216-residue chain is 3-keto-L-gulonate-6-phosphate decarboxylase UlaD (216 aa).

Asp11 contributes to the substrate binding site. Positions 33 and 62 each coordinate Mg(2+). Residue Arg192 participates in substrate binding.

The protein belongs to the HPS/KGPDC family. KGPDC subfamily. In terms of assembly, homodimer. Requires Mg(2+) as cofactor.

The catalysed reaction is 3-dehydro-L-gulonate 6-phosphate + H(+) = L-xylulose 5-phosphate + CO2. The protein operates within cofactor degradation; L-ascorbate degradation; D-xylulose 5-phosphate from L-ascorbate: step 2/4. In terms of biological role, catalyzes the decarboxylation of 3-keto-L-gulonate-6-P into L-xylulose-5-P. Is involved in the anaerobic L-ascorbate utilization. This is 3-keto-L-gulonate-6-phosphate decarboxylase UlaD from Shigella boydii serotype 18 (strain CDC 3083-94 / BS512).